The primary structure comprises 254 residues: Small ribosomal subunit protein uS2 (254 aa).

Belongs to the universal ribosomal protein uS2 family.

The protein is Small ribosomal subunit protein uS2 of Brucella ovis (strain ATCC 25840 / 63/290 / NCTC 10512).